We begin with the raw amino-acid sequence, 1669 residues long: Collagen alpha-1(IV) chain (1669 aa).

The first 27 residues, 1–27 (MGPRLSVWLLLLFAALLLHEERSRAAA), serve as a signal peptide directing secretion. A propeptide spans 28-172 (KGDCGGSGCG…LGHVPGTLLK (145 aa)) (N-terminal propeptide (7S domain)). Residues 47–1443 (QKGERGLPGL…MGPPGTPSVD (1397 aa)) form a disordered region. Low complexity predominate over residues 92-104 (TRGPPGAAGYPGN). A glycan (N-linked (GlcNAc...) asparagine) is linked at Asn-126. Residues 173 to 1440 (GERGFPGIPG…PGSMGPPGTP (1268 aa)) form a triple-helical region region. The segment covering 196-214 (VGPPGFTGPPGPPGPPGPP) has biased composition (pro residues). 3 positions are modified to 3-hydroxyproline: Pro-204, Pro-207, and Pro-210. Residues 234–247 (QGVSGPPGVPGQAQ) show a composition bias toward low complexity. Basic and acidic residues predominate over residues 289 to 298 (PGKDGEKGER). Residues 367 to 376 (PGQPGPPGFP) are compositionally biased toward pro residues. Residues 377–387 (TPGQAGAPGFP) show a composition bias toward low complexity. Composition is skewed to pro residues over residues 413-424 (PGPPGPPGPPGQ) and 436-448 (PGPP…PGTP). Residues 485–494 (PGEIGFPGQP) show a composition bias toward low complexity. 2 stretches are compositionally biased toward basic and acidic residues: residues 497 to 508 (KGDRGLPGRDGL) and 535 to 545 (FDMRLKGDKGD). Over residues 586 to 595 (GPPGGVGFPG) the composition is skewed to gly residues. Residues Pro-587 and Pro-602 each carry the 3-hydroxyproline modification. Pro-603 carries the 4-hydroxyproline modification. 3-hydroxyproline is present on Pro-605. A 4-hydroxyproline modification is found at Pro-606. Low complexity predominate over residues 611–620 (IGPVGEKGQA). Positions 621 to 630 (GFPGGPGSPG) are enriched in gly residues. Residues Pro-623, Pro-626, Pro-629, and Pro-632 each carry the 4-hydroxyproline modification. Pro-647 is modified (3-hydroxyproline). Low complexity predominate over residues 715 to 731 (RPGFNGLPGNPGPQGQK). The segment covering 758–767 (GSIGGPGVPG) has biased composition (gly residues). A compositionally biased stretch (pro residues) spans 784-802 (PGPPGVQGPAGPPGVPGIG). Gly residues predominate over residues 803-817 (PPGAMGPPGGQGPPG). Composition is skewed to low complexity over residues 847–875 (SQGL…PGFP) and 994–1003 (DPGLSGTPGS). The segment covering 1011-1020 (GSVGGMGLPG) has biased composition (gly residues). Pro-1214 carries the post-translational modification 3-hydroxyproline. Residues 1220-1230 (QPGLPGTPGHP) show a composition bias toward low complexity. Over residues 1247 to 1258 (PGHPGPMGPPGF) the composition is skewed to pro residues. Over residues 1290–1299 (GMPGIGGSPG) the composition is skewed to gly residues. Low complexity-rich tracts occupy residues 1333-1343 (DQGVPGPKGLQ), 1368-1391 (PGLK…SVGL), and 1398-1412 (PGFD…ETGP). Residues 1413–1428 (FGPPGPRGFPGPPGPD) show a composition bias toward pro residues. Pro-1424 bears the 3-hydroxyproline mark. The region spanning 1445–1669 (GFLVTRHSQT…SRCQVCMRRT (225 aa)) is the Collagen IV NC1 domain. Cystine bridges form between Cys-1460/Cys-1551, Cys-1493/Cys-1548, Cys-1505/Cys-1511, Cys-1570/Cys-1665, Cys-1604/Cys-1662, and Cys-1616/Cys-1622. Met-1533 is covalently cross-linked (S-Lysyl-methionine sulfilimine (Met-Lys) (interchain with K-1651)). An S-Lysyl-methionine sulfilimine (Lys-Met) (interchain with M-1533) cross-link involves residue Lys-1651.

This sequence belongs to the type IV collagen family. There are six type IV collagen isoforms, alpha 1(IV)-alpha 6(IV), each of which can form a triple helix structure with 2 other chains to generate type IV collagen network. Interacts with EFEMP2. Lysines at the third position of the tripeptide repeating unit (G-X-Y) are hydroxylated. The modified lysines can be O-glycosylated. Post-translationally, contains 4-hydroxyproline. Prolines at the third position of the tripeptide repeating unit (G-X-Y) are hydroxylated in some or all of the chains. In terms of processing, contains 3-hydroxyproline. This modification occurs on the first proline residue in the sequence motif Gly-Pro-Hyp, where Hyp is 4-hydroxyproline. Type IV collagens contain numerous cysteine residues which are involved in inter- and intramolecular disulfide bonding. 12 of these, located in the NC1 domain, are conserved in all known type IV collagens. Post-translationally, the trimeric structure of the NC1 domains is stabilized by covalent bonds (sulfilimine cross-links) between Lys and Met residues. These cross-links are important for the mechanical stability of the basement membrane. Sulfilimine cross-link is catalyzed by PXDN. In terms of processing, proteolytic processing produces the C-terminal NC1 peptide, arresten. In terms of tissue distribution, detected in the basement membrane of the cornea (at protein level).

The protein resides in the secreted. It is found in the extracellular space. Its subcellular location is the extracellular matrix. The protein localises to the basement membrane. Functionally, type IV collagen is the major structural component of glomerular basement membranes (GBM), forming a 'chicken-wire' meshwork together with laminins, proteoglycans and entactin/nidogen. Its function is as follows. Arresten, comprising the C-terminal NC1 domain, inhibits angiogenesis and tumor formation. The C-terminal half is found to possess the anti-angiogenic activity. Specifically inhibits endothelial cell proliferation, migration and tube formation. This Mus musculus (Mouse) protein is Collagen alpha-1(IV) chain.